A 132-amino-acid chain; its full sequence is D-ribose pyranase (132 aa).

Histidine 20 serves as the catalytic Proton donor. Substrate is bound by residues aspartate 28, histidine 99, and tyrosine 121–asparagine 123.

The protein belongs to the RbsD / FucU family. RbsD subfamily. In terms of assembly, homodecamer.

The protein localises to the cytoplasm. The enzyme catalyses beta-D-ribopyranose = beta-D-ribofuranose. It participates in carbohydrate metabolism; D-ribose degradation; D-ribose 5-phosphate from beta-D-ribopyranose: step 1/2. In terms of biological role, catalyzes the interconversion of beta-pyran and beta-furan forms of D-ribose. This is D-ribose pyranase from Streptococcus agalactiae serotype Ia (strain ATCC 27591 / A909 / CDC SS700).